The chain runs to 340 residues: MAQLGAVVAVASSFFCASLFSAVHKIEEGHIGVYYRGGALLTSTSGPGFHLMLPFITSYKSVQTTLQTDEVKNVPCGTSGGVMIYFDRIEVVNFLVPNAVYDIVKNYTADYDKALIFNKIHHELNQFCSVHTLQEVYIELFDQIDENLKLALQQDLTSMAPGLVIQAVRVTKPNIPEAIRRNYELMESEKTKLLIAAQKQKVVEKEAETERKKALIEAEKVAQVAEITYGQKVMEKETEKKISEIEDAAFLAREKAKADAECYTALKIAEANKLKLTPEYLQLMKYKAIASNSKIYFGKDIPNMFMDSAGGLGKQFEGLSDDKLGFGLEDEPLEAPTKEN.

Residues 1–3 (MAQ) are Cytoplasmic-facing. The helical transmembrane segment at 4-24 (LGAVVAVASSFFCASLFSAVH) threads the bilayer. Over 25–340 (KIEEGHIGVY…EPLEAPTKEN (316 aa)) the chain is Lumenal. A glycan (N-linked (GlcNAc...) asparagine) is linked at N106. An interaction with ERLIN1 region spans residues 177–309 (EAIRRNYELM…DIPNMFMDSA (133 aa)). The residue at position 267 (K267) is an N6-acetyllysine.

It belongs to the band 7/mec-2 family. Forms a heteromeric complex with ERLIN1. In complex with ERLIN1, interacts with RNF170. Interacts with activated ITPR1, independently of the degree of ITPR1 polyubiquitination. Interacts with SCAP, INSIG1, SREBF1 and SREBF2 under cholesterol sufficiency conditions; indicative for an association with the SCAP-SREBP-INSIG complex. Probably part of an AMFR/gp78 and INSIG1-containing ubiquitin ligase complex involved in ERAD of HMGCR. Interacts with TMUB1; TMUB1 bridges the association with AMFR. Interacts with SYVN1 and RNF139. Interacts with TMEM259. Interacts with TMEM41B. In terms of processing, deubiquitinated by USP25; leading to stabilization.

Its subcellular location is the endoplasmic reticulum membrane. Component of the ERLIN1/ERLIN2 complex which mediates the endoplasmic reticulum-associated degradation (ERAD) of inositol 1,4,5-trisphosphate receptors (IP3Rs) such as ITPR1. Promotes sterol-accelerated ERAD of HMGCR probably implicating an AMFR/gp78-containing ubiquitin ligase complex. Involved in regulation of cellular cholesterol homeostasis by regulation the SREBP signaling pathway. May promote ER retention of the SCAP-SREBF complex. This is Erlin-2 (Erlin2) from Mus musculus (Mouse).